A 307-amino-acid polypeptide reads, in one-letter code: uncharacterized protein (307 aa).

This is an uncharacterized protein from Bacillus subtilis (strain 168).